Reading from the N-terminus, the 236-residue chain is tRNA1(Val) (adenine(37)-N6)-methyltransferase (236 aa).

The protein belongs to the methyltransferase superfamily. tRNA (adenine-N(6)-)-methyltransferase family.

Its subcellular location is the cytoplasm. The enzyme catalyses adenosine(37) in tRNA1(Val) + S-adenosyl-L-methionine = N(6)-methyladenosine(37) in tRNA1(Val) + S-adenosyl-L-homocysteine + H(+). In terms of biological role, specifically methylates the adenine in position 37 of tRNA(1)(Val) (anticodon cmo5UAC). The sequence is that of tRNA1(Val) (adenine(37)-N6)-methyltransferase from Actinobacillus pleuropneumoniae serotype 5b (strain L20).